A 296-amino-acid polypeptide reads, in one-letter code: FNSNMLRGSVCEEDVSLMTSIDNMIEEIDFYEKEIYKGSHSGGVIKGMDYDLEDDENDEDEMTEQMVEEVADHITQDMIDEVAHHVLDNITHDMAHMEEIVHGLSGDVTQIKEIVQKVNVAVEKVKHIVETEETQKTVEPEQIEETQNTVEPEQTEETQKTVEPEQTEETQNTVEPEQIEETQKTVEPEQTEEAQKTVEPEQTEETQKTVEPEQTEETQKTVEPEQTEETQKTVEPEQTEETQKTVEPEQTEETQKTVEPEQTEETQKTVEPEQTEETQNTVEPEPTQETQNTVEP.

The 1; approximate repeat unit spans residues 132-143; that stretch reads EETQKTVEPEQI. Positions 132–296 are 13.5 X 12 AA approximate tandem repeats of E-E-T-Q-K-T-V-E-P-E-Q-T; that stretch reads EETQKTVEPE…TQETQNTVEP (165 aa). Residues 133-296 are disordered; that stretch reads ETQKTVEPEQ…TQETQNTVEP (164 aa). A 2; approximate repeat occupies 144–155; the sequence is EETQNTVEPEQT. Repeat unit 3 spans residues 156 to 167; sequence EETQKTVEPEQT. Residues 168–179 form a 4; approximate repeat; it reads EETQNTVEPEQI. Residues 180–191 form repeat 5; that stretch reads EETQKTVEPEQT. Over residues 181 to 271 the composition is skewed to basic and acidic residues; that stretch reads ETQKTVEPEQ…QTEETQKTVE (91 aa). One copy of the 6; approximate repeat lies at 192–203; it reads EEAQKTVEPEQT. Tandem repeats lie at residues 204–215, 216–227, 228–239, 240–251, 252–263, and 264–275. The stretch at 276 to 287 is one 13; approximate repeat; it reads EETQNTVEPEPT. Polar residues predominate over residues 277-296; it reads ETQNTVEPEPTQETQNTVEP. The stretch at 288–293 is one 14; truncated repeat; it reads QETQNT.

The sequence is that of 110 kDa antigen from Plasmodium knowlesi.